A 418-amino-acid polypeptide reads, in one-letter code: UPF0261 protein BMEII0128 (418 aa).

Belongs to the UPF0261 family.

The protein is UPF0261 protein BMEII0128 of Brucella melitensis biotype 1 (strain ATCC 23456 / CCUG 17765 / NCTC 10094 / 16M).